The chain runs to 566 residues: Type 3 secretion system secretin (566 aa).

The N-terminal stretch at 1–22 (MKKFNIKSLTLLIVLLPLIVNA) is a signal peptide.

This sequence belongs to the bacterial secretin family. T3SS SctC subfamily. The core secretion machinery of the T3SS is composed of approximately 20 different proteins, including cytoplasmic components, a base, an export apparatus and a needle. This subunit is part of the base, which anchors the injectisome in the bacterial cell envelope. Forms a stable homooligomeric complex.

The protein resides in the cell outer membrane. In terms of biological role, component of the type III secretion system (T3SS), also called injectisome, which is used to inject bacterial effector proteins into eukaryotic host cells. Forms a ring-shaped multimeric structure with an apparent central pore in the outer membrane. The polypeptide is Type 3 secretion system secretin (Shigella sonnei).